Here is a 297-residue protein sequence, read N- to C-terminus: MKTLVVALGGNALLQRGEALTAENQYRNIASAVPALARLARSYRLAIVHGNGPQVGLLALQNLAWKEVEPYPLDVLVAESQGMIGYMLAQSLSAQPQMPPVTTVRTRIEVSPDDPAFLQPEKFIGPVYQPEEQEALEAAYGWQMKRDGKYLRRVVASPQPRKILDSEAIELLLKEGHVVICSGGGGVPVTDDGAGSEAVIDKDLAAALLAEQINADGLVILTDADAVYENWGMPQQRAIRHATPDELAPFAKADGSMGPKVTAVSGYVRSRGKPAWIGALSRIEETLAGEAGTCISL.

It belongs to the carbamate kinase family.

It is found in the cytoplasm. The enzyme catalyses hydrogencarbonate + NH4(+) + ATP = carbamoyl phosphate + ADP + H2O + H(+). It carries out the reaction carbamate + ATP = carbamoyl phosphate + ADP. It catalyses the reaction hydrogencarbonate + NH4(+) = carbamate + H2O + H(+). It functions in the pathway nitrogen metabolism; (S)-allantoin degradation. Functionally, kinase involved in the anaerobic nitrogen utilization via the assimilation of allantoin. Catalyzes the transfer of a phosphate group from carbamoyl phosphate to ADP to produce ATP and leave carbamate, which spontaneously hydrolyzes to ammonia and hydrogencarbonate. The sequence is that of Carbamate kinase from Escherichia coli O157:H7.